Reading from the N-terminus, the 416-residue chain is Squalene synthase (416 aa).

Positions 52 and 77 each coordinate NADP(+). Mg(2+)-binding residues include aspartate 80, glutamate 83, and aspartate 84. Residue arginine 218 coordinates NADP(+). Residues 284–304 (SVFNFCAIPQVMAIATLAACY) form a helical membrane-spanning segment. Residues lysine 315 and arginine 317 each coordinate NADP(+). A helical membrane pass occupies residues 384 to 404 (PIYLSFIMLLAALSWQYLSTL).

Belongs to the phytoene/squalene synthase family. It depends on Mg(2+) as a cofactor.

The protein localises to the endoplasmic reticulum membrane. The catalysed reaction is 2 (2E,6E)-farnesyl diphosphate + NADPH + H(+) = squalene + 2 diphosphate + NADP(+). It carries out the reaction 2 (2E,6E)-farnesyl diphosphate + NADH + H(+) = squalene + 2 diphosphate + NAD(+). It catalyses the reaction presqualene diphosphate + NADH + H(+) = squalene + diphosphate + NAD(+). The enzyme catalyses presqualene diphosphate + NADPH + H(+) = squalene + diphosphate + NADP(+). The catalysed reaction is 2 (2E,6E)-farnesyl diphosphate = presqualene diphosphate + diphosphate. The protein operates within terpene metabolism; lanosterol biosynthesis; lanosterol from farnesyl diphosphate: step 1/3. Its function is as follows. Catalyzes the condensation of 2 farnesyl pyrophosphate (FPP) moieties to form squalene. Proceeds in two distinct steps. In the first half-reaction, two molecules of FPP react to form the stable presqualene diphosphate intermediate (PSQPP), with concomitant release of a proton and a molecule of inorganic diphosphate. In the second half-reaction, PSQPP undergoes heterolysis, isomerization, and reduction with NADPH or NADH to form squalene. It is the first committed enzyme of the sterol biosynthesis pathway. The chain is Squalene synthase (Fdft1) from Mus musculus (Mouse).